The following is a 343-amino-acid chain: 3-dehydroquinate synthase (343 aa).

NAD(+) is bound by residues 61–66 (SGEKYK), 95–99 (GVISD), 119–120 (TT), K132, K141, and 159–162 (FLKT). 3 residues coordinate Zn(2+): E174, H231, and H248.

Belongs to the sugar phosphate cyclases superfamily. Dehydroquinate synthase family. It depends on NAD(+) as a cofactor. Co(2+) serves as cofactor. The cofactor is Zn(2+).

It is found in the cytoplasm. It catalyses the reaction 7-phospho-2-dehydro-3-deoxy-D-arabino-heptonate = 3-dehydroquinate + phosphate. Its pathway is metabolic intermediate biosynthesis; chorismate biosynthesis; chorismate from D-erythrose 4-phosphate and phosphoenolpyruvate: step 2/7. Catalyzes the conversion of 3-deoxy-D-arabino-heptulosonate 7-phosphate (DAHP) to dehydroquinate (DHQ). This Helicobacter pylori (strain J99 / ATCC 700824) (Campylobacter pylori J99) protein is 3-dehydroquinate synthase.